The sequence spans 498 residues: Ganglioside-induced differentiation-associated protein 2 (498 aa).

The 181-residue stretch at 43-223 (RSPFVYSRDV…TYQKLLPLYF (181 aa)) folds into the Macro domain. The interval 248-275 (PVVPERQIRISEKPGASEDNEEEDEDEG) is disordered. Positions 253 to 263 (RQIRISEKPGA) are enriched in basic and acidic residues. Acidic residues predominate over residues 265–275 (EDNEEEDEDEG). Position 281 is a phosphoserine (Ser-281). Residues 334-482 (DIASLKALYQ…FPPFVLEYDA (149 aa)) form the CRAL-TRIO domain.

The protein belongs to the GDAP2 family. As to expression, expressed at high levels in brain and testis, and at low levels in liver and kidney.

In Mus musculus (Mouse), this protein is Ganglioside-induced differentiation-associated protein 2 (Gdap2).